The primary structure comprises 214 residues: Pyridoxine/pyridoxamine 5'-phosphate oxidase (214 aa).

Residues 11–14 (RREY) and K68 each bind substrate. FMN is bound by residues 63-68 (RLVLLK), 78-79 (FT), R84, K85, and Q107. Residues Y125 and R129 each contribute to the substrate site. FMN is bound by residues 142–143 (QS) and W187. 193-195 (RLH) contributes to the substrate binding site. Residue R197 coordinates FMN.

This sequence belongs to the pyridoxamine 5'-phosphate oxidase family. Homodimer. It depends on FMN as a cofactor.

It catalyses the reaction pyridoxamine 5'-phosphate + O2 + H2O = pyridoxal 5'-phosphate + H2O2 + NH4(+). The catalysed reaction is pyridoxine 5'-phosphate + O2 = pyridoxal 5'-phosphate + H2O2. It functions in the pathway cofactor metabolism; pyridoxal 5'-phosphate salvage; pyridoxal 5'-phosphate from pyridoxamine 5'-phosphate: step 1/1. It participates in cofactor metabolism; pyridoxal 5'-phosphate salvage; pyridoxal 5'-phosphate from pyridoxine 5'-phosphate: step 1/1. In terms of biological role, catalyzes the oxidation of either pyridoxine 5'-phosphate (PNP) or pyridoxamine 5'-phosphate (PMP) into pyridoxal 5'-phosphate (PLP). This Blochmanniella floridana protein is Pyridoxine/pyridoxamine 5'-phosphate oxidase.